Reading from the N-terminus, the 650-residue chain is Acetyl-coenzyme A synthetase (650 aa).

CoA is bound by residues 191–194 (RGGR), Thr311, and Asn335. ATP contacts are provided by residues 387-389 (GEP), 411-416 (DTWWQT), Asp500, and Arg515. Ser523 serves as a coordination point for CoA. Arg526 serves as a coordination point for ATP. Val537, His539, and Val542 together coordinate Mg(2+). Arg584 is a binding site for CoA. Lys609 carries the post-translational modification N6-acetyllysine.

Belongs to the ATP-dependent AMP-binding enzyme family. Mg(2+) serves as cofactor. Acetylated. Deacetylation by the SIR2-homolog deacetylase activates the enzyme.

The catalysed reaction is acetate + ATP + CoA = acetyl-CoA + AMP + diphosphate. In terms of biological role, catalyzes the conversion of acetate into acetyl-CoA (AcCoA), an essential intermediate at the junction of anabolic and catabolic pathways. AcsA undergoes a two-step reaction. In the first half reaction, AcsA combines acetate with ATP to form acetyl-adenylate (AcAMP) intermediate. In the second half reaction, it can then transfer the acetyl group from AcAMP to the sulfhydryl group of CoA, forming the product AcCoA. The polypeptide is Acetyl-coenzyme A synthetase (Shewanella putrefaciens (strain CN-32 / ATCC BAA-453)).